Consider the following 341-residue polypeptide: Tetraacyldisaccharide 4'-kinase (341 aa).

54–61 (TVGGAGKT) contacts ATP.

It belongs to the LpxK family.

The enzyme catalyses a lipid A disaccharide + ATP = a lipid IVA + ADP + H(+). It functions in the pathway glycolipid biosynthesis; lipid IV(A) biosynthesis; lipid IV(A) from (3R)-3-hydroxytetradecanoyl-[acyl-carrier-protein] and UDP-N-acetyl-alpha-D-glucosamine: step 6/6. Its function is as follows. Transfers the gamma-phosphate of ATP to the 4'-position of a tetraacyldisaccharide 1-phosphate intermediate (termed DS-1-P) to form tetraacyldisaccharide 1,4'-bis-phosphate (lipid IVA). This Brucella melitensis biotype 1 (strain ATCC 23456 / CCUG 17765 / NCTC 10094 / 16M) protein is Tetraacyldisaccharide 4'-kinase.